The chain runs to 1099 residues: Probable inorganic carbon transporter subunit DabA (1099 aa).

Residues 175-194 (RQGRRRFATTERRTRRTRRS) are disordered. The segment covering 176–194 (QGRRRFATTERRTRRTRRS) has biased composition (basic residues). 4 residues coordinate Zn(2+): cysteine 514, aspartate 516, histidine 722, and cysteine 737. The tract at residues 1071 to 1099 (AGAGAAQPTRDAIELPEQASGPLPARDGQ) is disordered.

Belongs to the inorganic carbon transporter (TC 9.A.2) DabA family. In terms of assembly, forms a complex with DabB. Zn(2+) serves as cofactor.

It localises to the cell membrane. Its function is as follows. Part of an energy-coupled inorganic carbon pump. The chain is Probable inorganic carbon transporter subunit DabA from Parafrankia sp. (strain EAN1pec).